Reading from the N-terminus, the 297-residue chain is Large ribosomal subunit protein uL18 (297 aa).

N-acetylglycine is present on G2. N6-acetyllysine occurs at positions 5 and 48. At S185 the chain carries Phosphoserine. K220 bears the N6-acetyllysine; alternate mark. K220 participates in a covalent cross-link: Glycyl lysine isopeptide (Lys-Gly) (interchain with G-Cter in SUMO1); alternate. K220 is covalently cross-linked (Glycyl lysine isopeptide (Lys-Gly) (interchain with G-Cter in SUMO2); alternate). Position 232 is a phosphothreonine (T232). The segment at 253–297 (YEKKPKKEVKKKRWNRPKMSLAQKKDRVAQKKASFLRAQERAAES) is disordered. Residues 258–268 (KKEVKKKRWNR) are compositionally biased toward basic residues. Phosphoserine is present on S272.

It belongs to the universal ribosomal protein uL18 family. As to quaternary structure, component of the large ribosomal subunit (LSU). Part of the 5S RNP complex, which is a LSU subcomplex composed of the 5S RNA, RPL5 and RPL11. Component of a hexameric 5S RNP precursor complex, composed of 5S RNA, RRS1, RPF2/BXDC1, RPL5, RPL11 and HEATR3; this complex acts as a precursor for ribosome assembly. Interacts with NVL in an ATP-dependent manner. Interacts with RRP1B. Interacts with IPO5, IPO7 and KPNB1; these interactions may be involved in RPL5 nuclear import for the assembly of ribosomal subunits. Interacts with RRP1B.

The protein localises to the cytoplasm. The protein resides in the nucleus. It is found in the nucleolus. Functionally, component of the ribosome, a large ribonucleoprotein complex responsible for the synthesis of proteins in the cell. The small ribosomal subunit (SSU) binds messenger RNAs (mRNAs) and translates the encoded message by selecting cognate aminoacyl-transfer RNA (tRNA) molecules. The large subunit (LSU) contains the ribosomal catalytic site termed the peptidyl transferase center (PTC), which catalyzes the formation of peptide bonds, thereby polymerizing the amino acids delivered by tRNAs into a polypeptide chain. The nascent polypeptides leave the ribosome through a tunnel in the LSU and interact with protein factors that function in enzymatic processing, targeting, and the membrane insertion of nascent chains at the exit of the ribosomal tunnel. As part of the 5S RNP/5S ribonucleoprotein particle it is an essential component of the LSU, required for its formation and the maturation of rRNAs. It also couples ribosome biogenesis to p53/TP53 activation. As part of the 5S RNP it accumulates in the nucleoplasm and inhibits MDM2, when ribosome biogenesis is perturbed, mediating the stabilization and the activation of TP53. This is Large ribosomal subunit protein uL18 (RPL5) from Macaca fascicularis (Crab-eating macaque).